Reading from the N-terminus, the 1053-residue chain is Probable dihydropyrimidine dehydrogenase [NADP(+)] (1053 aa).

Residues 84-115 form the 4Fe-4S ferredoxin-type 1 domain; the sequence is ERGALKEAMRCLKCADAPCQKSCPTQLDIKSF. The [4Fe-4S] cluster site is built by Cys94, Cys97, Cys102, Cys106, Cys145, Cys151, Cys155, and Gln171. Residues 207–211, 231–239, Arg248, and Leu274 each bind FAD; these read GCGPA and EKRAYIGGL. NADP(+) is bound by residues 354–357, 378–379, Arg385, 451–453, and 495–501; these read AGDT, RK, AFG, and DVAGVAE. Position 494 to 503 (494 to 503) interacts with FAD; sequence GDVAGVAETT. FMN-binding positions include Ser574 and 598-599; that span reads KT. Substrate contacts are provided by residues Asn633 and 692-694; that span reads NLS. Cys695 serves as the catalytic Proton acceptor. Lys733 contacts FMN. 760–761 lines the substrate pocket; sequence NT. FMN-binding positions include Gly791, 817-819, and 840-841; these read TGG and CS. 4Fe-4S ferredoxin-type domains follow at residues 949–981 and 983–1013; these read EVAI…FDAV and HQPH…MVPR. Positions 958, 961, 964, 968, 992, 995, 998, and 1002 each coordinate [4Fe-4S] cluster.

Belongs to the dihydropyrimidine dehydrogenase family. Requires [4Fe-4S] cluster as cofactor. It depends on FAD as a cofactor. FMN is required as a cofactor.

It carries out the reaction 5,6-dihydrouracil + NADP(+) = uracil + NADPH + H(+). It functions in the pathway amino-acid biosynthesis; beta-alanine biosynthesis. Its function is as follows. Involved in pyrimidine base degradation. Catalyzes the reduction of uracil and thymine. Also involved the degradation of the chemotherapeutic drug 5-fluorouracil. In Caenorhabditis briggsae, this protein is Probable dihydropyrimidine dehydrogenase [NADP(+)].